Reading from the N-terminus, the 231-residue chain is Modulator of macroautophagy TMEM150B-B (231 aa).

Methionine 1 is a topological domain (cytoplasmic). The chain crosses the membrane as a helical span at residues 2 to 22 (WAWALLPICLTVWATGGIWIV). Residues 23 to 50 (YAMSVSNGSVNLSDGFPYISVSGTYPPQ) lie on the Extracellular side of the membrane. N-linked (GlcNAc...) asparagine glycosylation is found at asparagine 29 and asparagine 33. Residues 51 to 71 (SCVFGQVLNVGAMLAVWISVI) traverse the membrane as a helical segment. Topologically, residues 72–83 (RFQQIRDYNCHS) are cytoplasmic. Residues 84–104 (VLNSVSLATGILCALGTSIVG) form a helical membrane-spanning segment. The Extracellular segment spans residues 105-115 (NFQQSNQLQTH). A helical membrane pass occupies residues 116–136 (LAGAFLAFIIGNVYFWMQTAL). Topologically, residues 137–150 (TYMVKPKHGGCYIG) are cytoplasmic. The helical transmembrane segment at 151-171 (PIRFCLSIACTALIVAMAVFL) threads the bilayer. Residues 172 to 183 (KMNMKSVSAICE) are Extracellular-facing. The helical transmembrane segment at 184-204 (WIVAMILFLLYGLFAVDFWHL) threads the bilayer. At 205–231 (DGHFFHVKKRRTVIPNEMEVSTVTLSI) the chain is on the cytoplasmic side.

Belongs to the DRAM/TMEM150 family.

The protein localises to the cell membrane. The protein resides in the endosome membrane. It localises to the cytoplasmic vesicle. It is found in the autophagosome membrane. Its function is as follows. Modulator of macroautophagy that causes accumulation of autophagosomes under basal conditions and enhances autophagic flux. Represses cell death and promotes long-term clonogenic survival of cells grown in the absence of glucose in a macroautophagy-independent manner. May have some role in extracellular matrix engulfment or growth factor receptor recycling, both of which can modulate cell survival. In Xenopus laevis (African clawed frog), this protein is Modulator of macroautophagy TMEM150B-B.